The sequence spans 261 residues: Polycomb group RING finger protein 1 (261 aa).

Residues 45–84 (CYLCAGYFIDATTITECLHTFCKSCIVKYLQTSKYCPMCN) form an RING-type zinc finger.

In terms of assembly, component of a PRC1-like complex.

The protein localises to the nucleus. Component of a Polycomb group (PcG) multiprotein PRC1-like complex, a complex class required to maintain the transcriptionally repressive state of many genes, including Hox genes, throughout development. PcG PRC1 complex acts via chromatin remodeling and modification of histones; it mediates monoubiquitination of histone H2A 'Lys-119', rendering chromatin heritably changed in its expressibility. This chain is Polycomb group RING finger protein 1 (pcgf1), found in Danio rerio (Zebrafish).